A 211-amino-acid polypeptide reads, in one-letter code: Troponin I, cardiac muscle (211 aa).

The segment at 1–25 (MADESSDAAGEPQPAPAPVRRRSSA) is disordered. N-acetylalanine is present on Ala2. A phosphoserine mark is found at Ser5 and Ser6. Phosphoserine; by PKA and PKD/PRKD1 occurs at positions 23 and 24. Tyr27 is subject to Phosphotyrosine. A Phosphothreonine; by STK4/MST1 modification is found at Thr32. The involved in binding TNC stretch occupies residues 33–80 (EPHAKKKSKISASRKLQLKTLMLQIAKQEMEREAEERRGEKGRVLSTR). Ser43 and Ser45 each carry phosphoserine; by PKC/PRKCE. Residue Thr52 is modified to Phosphothreonine; by STK4/MST1. The residue at position 78 (Ser78) is a Phosphoserine. A Phosphothreonine modification is found at Thr79. A phosphothreonine; by STK4/MST1 mark is found at Thr130 and Thr144. The tract at residues 130 to 151 (TQKIYDLRGKFKRPTLRRVRIS) is involved in binding TNC and actin. Phosphoserine; by PAK3 is present on Ser151. Residues Ser167 and Ser200 each carry the phosphoserine modification.

This sequence belongs to the troponin I family. As to quaternary structure, interacts with TRIM63. Binds to actin and tropomyosin. Interacts with STK4/MST1. In terms of processing, phosphorylated at Ser-23 and Ser-24 by PRKD1; phosphorylation reduces myofilament calcium sensitivity. Phosphorylated preferentially at Thr-32. Phosphorylation by STK4/MST1 alters its binding affinity to TNNC1 (cardiac Tn-C) and TNNT2 (cardiac Tn-T). Phosphorylated at Ser-43 and Ser-45 by PRKCE; phosphorylation increases myocardium contractile dysfunction.

Its function is as follows. Troponin I is the inhibitory subunit of troponin, the thin filament regulatory complex which confers calcium-sensitivity to striated muscle actomyosin ATPase activity. This is Troponin I, cardiac muscle (Tnni3) from Rattus norvegicus (Rat).